The primary structure comprises 280 residues: Shikimate dehydrogenase (NADP(+)) (280 aa).

Shikimate is bound by residues 15–17 (SLS) and T62. K66 (proton acceptor) is an active-site residue. Positions 88 and 104 each coordinate shikimate. NADP(+)-binding positions include 128 to 132 (GAGGA), 151 to 156 (NRTEER), and I222. Residue Y224 coordinates shikimate. An NADP(+)-binding site is contributed by G245.

This sequence belongs to the shikimate dehydrogenase family. In terms of assembly, homodimer.

The enzyme catalyses shikimate + NADP(+) = 3-dehydroshikimate + NADPH + H(+). The protein operates within metabolic intermediate biosynthesis; chorismate biosynthesis; chorismate from D-erythrose 4-phosphate and phosphoenolpyruvate: step 4/7. Its function is as follows. Involved in the biosynthesis of the chorismate, which leads to the biosynthesis of aromatic amino acids. Catalyzes the reversible NADPH linked reduction of 3-dehydroshikimate (DHSA) to yield shikimate (SA). The protein is Shikimate dehydrogenase (NADP(+)) of Methanosarcina acetivorans (strain ATCC 35395 / DSM 2834 / JCM 12185 / C2A).